A 337-amino-acid polypeptide reads, in one-letter code: Holliday junction branch migration complex subunit RuvB (337 aa).

The large ATPase domain (RuvB-L) stretch occupies residues 4-186 (ADRLIAADNP…FGIVQRLEYY (183 aa)). Residues Ile-25, Arg-26, Gly-67, Lys-70, Thr-71, Thr-72, 133-135 (EDY), Arg-176, Tyr-186, and Arg-223 each bind ATP. Residue Thr-71 participates in Mg(2+) binding. Residues 187-257 (KVEDLQHIVQ…IADKALNMLD (71 aa)) form a small ATPAse domain (RuvB-S) region. Residues 260–337 (VRGFDYMDRK…LHFGIDKPDK (78 aa)) are head domain (RuvB-H). DNA contacts are provided by Arg-296, Arg-315, and Arg-320.

Belongs to the RuvB family. As to quaternary structure, homohexamer. Forms an RuvA(8)-RuvB(12)-Holliday junction (HJ) complex. HJ DNA is sandwiched between 2 RuvA tetramers; dsDNA enters through RuvA and exits via RuvB. An RuvB hexamer assembles on each DNA strand where it exits the tetramer. Each RuvB hexamer is contacted by two RuvA subunits (via domain III) on 2 adjacent RuvB subunits; this complex drives branch migration. In the full resolvosome a probable DNA-RuvA(4)-RuvB(12)-RuvC(2) complex forms which resolves the HJ.

Its subcellular location is the cytoplasm. The enzyme catalyses ATP + H2O = ADP + phosphate + H(+). The RuvA-RuvB-RuvC complex processes Holliday junction (HJ) DNA during genetic recombination and DNA repair, while the RuvA-RuvB complex plays an important role in the rescue of blocked DNA replication forks via replication fork reversal (RFR). RuvA specifically binds to HJ cruciform DNA, conferring on it an open structure. The RuvB hexamer acts as an ATP-dependent pump, pulling dsDNA into and through the RuvAB complex. RuvB forms 2 homohexamers on either side of HJ DNA bound by 1 or 2 RuvA tetramers; 4 subunits per hexamer contact DNA at a time. Coordinated motions by a converter formed by DNA-disengaged RuvB subunits stimulates ATP hydrolysis and nucleotide exchange. Immobilization of the converter enables RuvB to convert the ATP-contained energy into a lever motion, pulling 2 nucleotides of DNA out of the RuvA tetramer per ATP hydrolyzed, thus driving DNA branch migration. The RuvB motors rotate together with the DNA substrate, which together with the progressing nucleotide cycle form the mechanistic basis for DNA recombination by continuous HJ branch migration. Branch migration allows RuvC to scan DNA until it finds its consensus sequence, where it cleaves and resolves cruciform DNA. This Aliivibrio fischeri (strain ATCC 700601 / ES114) (Vibrio fischeri) protein is Holliday junction branch migration complex subunit RuvB.